The following is a 326-amino-acid chain: Virulence factor CaO19.6688 (326 aa).

5 disordered regions span residues 19-91 (FNSL…KLPS), 112-137 (EEDN…GTTK), 161-184 (NTTI…PSFP), 222-245 (NVGQ…NDLL), and 276-326 (YEYG…PKIK). 3 stretches are compositionally biased toward low complexity: residues 21 to 42 (SLKS…SSSS), 53 to 78 (NRNT…NTTP), and 117 to 137 (EQQL…GTTK).

Its function is as follows. Virulence factor involved in pathogen-host interaction. Modulates host pro-inflammatory cytokine interleukin-1 beta (IL1B) expression. This chain is Virulence factor CaO19.6688, found in Candida albicans (strain SC5314 / ATCC MYA-2876) (Yeast).